Here is a 446-residue protein sequence, read N- to C-terminus: tRNA-2-methylthio-N(6)-dimethylallyladenosine synthase (446 aa).

Positions 3 to 124 (KKLYIKTYGC…LPELISKVVR (122 aa)) constitute an MTTase N-terminal domain. Positions 12, 48, 87, 162, 166, and 169 each coordinate [4Fe-4S] cluster. A Radical SAM core domain is found at 148-380 (YPQGASSFIS…QKELAAQQLA (233 aa)). In terms of domain architecture, TRAM spans 383–446 (ESCIGSTMKV…LNSLSGEIYR (64 aa)).

This sequence belongs to the methylthiotransferase family. MiaB subfamily. Monomer. The cofactor is [4Fe-4S] cluster.

It is found in the cytoplasm. It catalyses the reaction N(6)-dimethylallyladenosine(37) in tRNA + (sulfur carrier)-SH + AH2 + 2 S-adenosyl-L-methionine = 2-methylsulfanyl-N(6)-dimethylallyladenosine(37) in tRNA + (sulfur carrier)-H + 5'-deoxyadenosine + L-methionine + A + S-adenosyl-L-homocysteine + 2 H(+). Its function is as follows. Catalyzes the methylthiolation of N6-(dimethylallyl)adenosine (i(6)A), leading to the formation of 2-methylthio-N6-(dimethylallyl)adenosine (ms(2)i(6)A) at position 37 in tRNAs that read codons beginning with uridine. In Rickettsia bellii (strain OSU 85-389), this protein is tRNA-2-methylthio-N(6)-dimethylallyladenosine synthase.